The sequence spans 234 residues: N-(5'-phosphoribosyl)anthranilate isomerase (234 aa).

Positions R211–G234 are disordered.

The protein belongs to the TrpF family.

It catalyses the reaction N-(5-phospho-beta-D-ribosyl)anthranilate = 1-(2-carboxyphenylamino)-1-deoxy-D-ribulose 5-phosphate. It functions in the pathway amino-acid biosynthesis; L-tryptophan biosynthesis; L-tryptophan from chorismate: step 3/5. This Afipia carboxidovorans (strain ATCC 49405 / DSM 1227 / KCTC 32145 / OM5) (Oligotropha carboxidovorans) protein is N-(5'-phosphoribosyl)anthranilate isomerase.